A 469-amino-acid chain; its full sequence is Asparagine--tRNA ligase (469 aa).

It belongs to the class-II aminoacyl-tRNA synthetase family. Homodimer.

It is found in the cytoplasm. The enzyme catalyses tRNA(Asn) + L-asparagine + ATP = L-asparaginyl-tRNA(Asn) + AMP + diphosphate + H(+). The sequence is that of Asparagine--tRNA ligase from Porphyromonas gingivalis (strain ATCC BAA-308 / W83).